A 1423-amino-acid polypeptide reads, in one-letter code: DNA-directed RNA polymerase, mitochondrial (1423 aa).

The transit peptide at 1-73 (MLPRTASATR…RATVGFERHL (73 aa)) directs the protein to the mitochondrion. The segment at 266-303 (NMPDNVDPDTFAQQQQQQQQQQQQQQEQQQQQDTSIDQ) is disordered. Positions 278–297 (QQQQQQQQQQQQQQEQQQQQ) are enriched in low complexity. Residues Asp-901 and Lys-970 contribute to the active site. Basic and acidic residues predominate over residues 1055-1064 (EFERSERSPH). Residues 1055–1087 (EFERSERSPHGDGTASGENITLAGNPRKSSAHK) are disordered. Residue Asp-1180 is part of the active site. The interval 1316-1342 (VRRGREMDEEGEVDGSEEAVEHEDGMH) is disordered. Positions 1322–1336 (MDEEGEVDGSEEAVE) are enriched in acidic residues.

It belongs to the phage and mitochondrial RNA polymerase family.

Its subcellular location is the mitochondrion. The enzyme catalyses RNA(n) + a ribonucleoside 5'-triphosphate = RNA(n+1) + diphosphate. In terms of biological role, DNA-dependent RNA polymerase catalyzes the transcription of DNA into RNA using the four ribonucleoside triphosphates as substrates. The sequence is that of DNA-directed RNA polymerase, mitochondrial (cyt-5) from Neurospora crassa (strain ATCC 24698 / 74-OR23-1A / CBS 708.71 / DSM 1257 / FGSC 987).